The chain runs to 407 residues: Serine/threonine transporter SstT (407 aa).

9 consecutive transmembrane segments (helical) span residues Ile11 to Ala31, Phe43 to Leu63, Ile82 to Phe102, Ala141 to Leu161, Leu192 to Gly212, Leu216 to Val236, Met298 to Val318, Ala339 to Ile359, and Ile363 to Thr383.

This sequence belongs to the dicarboxylate/amino acid:cation symporter (DAACS) (TC 2.A.23) family.

It localises to the cell inner membrane. The catalysed reaction is L-serine(in) + Na(+)(in) = L-serine(out) + Na(+)(out). It catalyses the reaction L-threonine(in) + Na(+)(in) = L-threonine(out) + Na(+)(out). Involved in the import of serine and threonine into the cell, with the concomitant import of sodium (symport system). The sequence is that of Serine/threonine transporter SstT from Shewanella denitrificans (strain OS217 / ATCC BAA-1090 / DSM 15013).